We begin with the raw amino-acid sequence, 262 residues long: Homeobox-leucine zipper protein HOX24 (262 aa).

Disordered regions lie at residues 44–68 (AAGRGGGDGDGGGGGGGGGGERKRR) and 162–189 (LNERQDQSGSCDGGGAEGDDDDKRNSVM). Positions 46-62 (GRGGGDGDGGGGGGGGG) are enriched in gly residues. The homeobox DNA-binding region spans 61 to 122 (GGGERKRRFT…NKRARWRSKQ (62 aa)). The segment at 121–165 (KQIEHDYAALRAQYDALHARVESLRQEKLALAAQVDELRGKLNER) is leucine-zipper.

This sequence belongs to the HD-ZIP homeobox family. Class I subfamily. Expressed in roots and panicles.

It is found in the nucleus. Functionally, probable transcription factor. The polypeptide is Homeobox-leucine zipper protein HOX24 (HOX24) (Oryza sativa subsp. indica (Rice)).